The chain runs to 67 residues: MVTIERLLPYSYWIGHPVTNRAIIYPFVGFIPLSLKEVKTLQFIVKLNTAKWELKYQRKRLGHMRPG.

The segment at 13-18 (WIGHPV) is important for viral replication in intestinal cells. The hydrophobic stretch at 22 to 38 (AIIYPFVGFIPLSLKEV) threads the membrane.

Its subcellular location is the host cytoplasmic vesicle membrane. Its function is as follows. Facilitates virus release from intestinal cells in vitro, possibly through the host autophagic pathway. The protein is ORF2p protein of Homo sapiens (Human).